Reading from the N-terminus, the 408-residue chain is Peptidase T (408 aa).

Histidine 78 contacts Zn(2+). Aspartate 80 is an active-site residue. Aspartate 140 is a binding site for Zn(2+). The active-site Proton acceptor is the glutamate 174. Residues glutamate 175, aspartate 197, and histidine 379 each contribute to the Zn(2+) site.

The protein belongs to the peptidase M20B family. The cofactor is Zn(2+).

Its subcellular location is the cytoplasm. It carries out the reaction Release of the N-terminal residue from a tripeptide.. Functionally, cleaves the N-terminal amino acid of tripeptides. This Staphylococcus aureus (strain MRSA252) protein is Peptidase T.